Here is a 758-residue protein sequence, read N- to C-terminus: Aspartyl/asparaginyl beta-hydroxylase (758 aa).

Positions 1-46 are disordered; that stretch reads MAQRKNAKSSGNSSSSGSGSGSTSAGSSSPGARRETKHGGHKNGRK. At 1–53 the chain is on the cytoplasmic side; that stretch reads MAQRKNAKSSGNSSSSGSGSGSTSAGSSSPGARRETKHGGHKNGRKGGLSGTS. The segment covering 9–31 has biased composition (low complexity); the sequence is SSGNSSSSGSGSGSTSAGSSSPG. Phosphoserine is present on S14. The helical; Signal-anchor for type II membrane protein transmembrane segment at 54 to 74 threads the bilayer; it reads FFTWFMVIALLGVWTSVAVVW. N-linked (GlcNAc...) asparagine glycosylation is present at L64. Topologically, residues 75-758 are lumenal; the sequence is FDLVDYEEVL…PQQRRSLPAI (684 aa). 5 residues coordinate Ca(2+): D91, D93, D95, D97, and D102. 2 disordered regions span residues 111-140 and 304-324; these read ERST…EAEP and EEQQ…EQKA. Residues 313-324 show a composition bias toward basic and acidic residues; it reads TNRKTDDPEQKA. The stretch at 341–374 is one TPR 1 repeat; that stretch reads IKAELDAAEKLRKRGKIEEAVNAFKELVRKYPQS. N452 carries an N-linked (GlcNAc...) asparagine glycan. 3 TPR repeats span residues 454-487, 489-521, and 525-557; these read TSLK…TPND, FAKV…GDPG, and GRFY…GHFA. 2-oxoglutarate is bound at residue W625. C641 and C648 are disulfide-bonded. S668 is a 2-oxoglutarate binding site. H679 is a binding site for Fe cation. 688 to 690 provides a ligand contact to 2-oxoglutarate; the sequence is RMH. N-linked (GlcNAc...) asparagine glycosylation is present at N706. H725 serves as a coordination point for Fe cation. Residue R735 participates in 2-oxoglutarate binding.

This sequence belongs to the aspartyl/asparaginyl beta-hydroxylase family. Monomer. Isoform 8 interacts with ORAI1 and STIM1. Isoform 4 interacts with CASQ2. It depends on Fe cation as a cofactor. Isoform 1 is detected in all tissues tested. Isoform 8 is mainly expressed in pancreas, heart, brain, kidney and liver. Isoform 8 is expressed in kidney (at protein level).

It localises to the endoplasmic reticulum membrane. The protein localises to the sarcoplasmic reticulum membrane. The catalysed reaction is L-aspartyl-[protein] + 2-oxoglutarate + O2 = 3-hydroxy-L-aspartyl-[protein] + succinate + CO2. Specifically hydroxylates an Asp or Asn residue in certain epidermal growth factor-like (EGF) domains of a number of proteins. Functionally, membrane-bound Ca(2+)-sensing protein, which is a structural component of the ER-plasma membrane junctions. Isoform 8 regulates the activity of Ca(+2) released-activated Ca(+2) (CRAC) channels in T-cells. The protein is Aspartyl/asparaginyl beta-hydroxylase (ASPH) of Homo sapiens (Human).